A 211-amino-acid chain; its full sequence is MAAEQKKVAKKPRAKPAHPSSSEMVLAAITALKERGGSSAQAIRKYIEKNYTVDIKKQAIFIKRALITGVEKGTLVQVKGKGASGSFKLGKKKEGKSDAQKAPDAAKKAKLAAKKKEAKEKKAARSKAKKEKLAAKKASKKTTKKVKKPAAKKAKKPAAKKAAKKPAAKKPAAKKAAAKPAPAKKAAKKPAAKKAAKKVAKKPAAKKAAKK.

2 disordered regions span residues 1–22 (MAAEQKKVAKKPRAKPAHPSSS) and 81–211 (KGAS…AAKK). The region spanning 17-91 (AHPSSSEMVL…GASGSFKLGK (75 aa)) is the H15 domain. Basic and acidic residues-rich tracts occupy residues 95–107 (GKSDAQKAPDAAK) and 114–123 (KKKEAKEKKA). 2 stretches are compositionally biased toward basic residues: residues 124 to 177 (ARSK…KKAA) and 185 to 211 (KAAKKPAAKKAAKKVAKKPAAKKAAKK).

It belongs to the histone H1/H5 family.

It is found in the nucleus. The protein resides in the chromosome. Its function is as follows. Histones H1 are necessary for the condensation of nucleosome chains into higher-order structures. In Strongylocentrotus purpuratus (Purple sea urchin), this protein is Histone H1-beta, late embryonic.